The primary structure comprises 459 residues: Ribulose bisphosphate carboxylase (459 aa).

A substrate-binding site is contributed by asparagine 111. Lysine 166 acts as the Proton acceptor in catalysis. Residue lysine 168 coordinates substrate. Residues lysine 191, aspartate 193, and glutamate 194 each contribute to the Mg(2+) site. Lysine 191 is modified (N6-carboxylysine). Histidine 287 acts as the Proton acceptor in catalysis. Substrate contacts are provided by arginine 288, histidine 321, and serine 368.

The protein belongs to the RuBisCO large chain family. Type II subfamily. In terms of assembly, homodimer. Mg(2+) serves as cofactor.

It carries out the reaction 2 (2R)-3-phosphoglycerate + 2 H(+) = D-ribulose 1,5-bisphosphate + CO2 + H2O. It catalyses the reaction D-ribulose 1,5-bisphosphate + O2 = 2-phosphoglycolate + (2R)-3-phosphoglycerate + 2 H(+). Functionally, ruBisCO catalyzes two reactions: the carboxylation of D-ribulose 1,5-bisphosphate, the primary event in carbon dioxide fixation, as well as the oxidative fragmentation of the pentose substrate. Both reactions occur simultaneously and in competition at the same active site. This chain is Ribulose bisphosphate carboxylase, found in Cereibacter sphaeroides (Rhodobacter sphaeroides).